A 482-amino-acid chain; its full sequence is Glutamate--tRNA ligase 1 (482 aa).

The 'HIGH' region motif lies at P18–G28. Positions K252–R256 match the 'KMSKS' region motif. K255 lines the ATP pocket.

This sequence belongs to the class-I aminoacyl-tRNA synthetase family. Glutamate--tRNA ligase type 1 subfamily. In terms of assembly, monomer.

It localises to the cytoplasm. It catalyses the reaction tRNA(Glu) + L-glutamate + ATP = L-glutamyl-tRNA(Glu) + AMP + diphosphate. Functionally, catalyzes the attachment of glutamate to tRNA(Glu) in a two-step reaction: glutamate is first activated by ATP to form Glu-AMP and then transferred to the acceptor end of tRNA(Glu). This is Glutamate--tRNA ligase 1 from Erythrobacter litoralis (strain HTCC2594).